Here is a 471-residue protein sequence, read N- to C-terminus: Argininosuccinate lyase (471 aa).

It belongs to the lyase 1 family. Argininosuccinate lyase subfamily.

The protein resides in the cytoplasm. It carries out the reaction 2-(N(omega)-L-arginino)succinate = fumarate + L-arginine. It functions in the pathway amino-acid biosynthesis; L-arginine biosynthesis; L-arginine from L-ornithine and carbamoyl phosphate: step 3/3. The polypeptide is Argininosuccinate lyase (Ehrlichia canis (strain Jake)).